A 587-amino-acid polypeptide reads, in one-letter code: RuBisCO large subunit-binding protein subunit alpha, chloroplastic (587 aa).

Residues 1–25 are compositionally biased toward polar residues; it reads MASTNALSSTSILRSPTNQAQTSLS. The interval 1–33 is disordered; the sequence is MASTNALSSTSILRSPTNQAQTSLSKKVKQHGR. A chloroplast-targeting transit peptide spans 1–47; the sequence is MASTNALSSTSILRSPTNQAQTSLSKKVKQHGRVNFRQKPNRFVVKA.

It belongs to the chaperonin (HSP60) family. As to quaternary structure, oligomer of probably six alpha and six beta subunits.

It localises to the plastid. The protein resides in the chloroplast. In terms of biological role, this protein binds RuBisCO small and large subunits and is implicated in the assembly of the enzyme oligomer. The polypeptide is RuBisCO large subunit-binding protein subunit alpha, chloroplastic (Pisum sativum (Garden pea)).